Reading from the N-terminus, the 633-residue chain is Pentatricopeptide repeat-containing protein At1g43980, mitochondrial (633 aa).

A mitochondrion-targeting transit peptide spans 1–30; that stretch reads MFQLLRRAHGLCMPSSLYFSRLVNRSLLSK. PPR repeat units lie at residues 50-80, 81-111, 112-146, 147-178, 180-210, 211-245, 246-280, 281-311, 312-346, 347-380, 381-411, 412-447, 448-483, and 484-514; these read TTYWGNRCLQLYFKSGSVINALQLFDDIPDK, NTITWNVCLKGLFKNGYLNNALDLFDEMPER, DVVSWNTMISGLVSCGFHEYGIRVFFDMQRWEIRP, TEFTFSILASLVTCVRHGEQIHGNAICSGVSR, NLVVWNSVMDMYRRLGVFDYALSVFLTMEDR, DVVSWNCLILSCSDSGNKEVALDQFWLMREMEIQP, DEYTVSMVVSICSDLRELSKGKQALALCIKMGFLS, NSIVLGAGIDMFSKCNRLDDSVKLFRELEKW, DSVLCNSMIGSYSWHCCGEDALRLFILAMTQSVRP, DKFTFSSVLSSMNAVMLDHGADVHSLVIKLGFDL, DTAVATSLMEMYFKTGSVDLAMGVFAKTDGK, DLIFWNTVIMGLARNSRAVESLAIFNQLLMNQSLKP, DRVTLMGILVACCYAGFVNEGIQIFSSMEKAHGVNP, and GNEHYACIIELLCRVGMINEAKDIADKIPFE. The type E motif stretch occupies residues 519 to 594; the sequence is IWEPILCASL…AQGSSKISIE (76 aa).

The protein belongs to the PPR family. PCMP-E subfamily.

It localises to the mitochondrion. The polypeptide is Pentatricopeptide repeat-containing protein At1g43980, mitochondrial (PCMP-E58) (Arabidopsis thaliana (Mouse-ear cress)).